The following is a 3034-amino-acid chain: Cadherin EGF LAG seven-pass G-type receptor 1 (3034 aa).

Residues 1–29 form the signal peptide; it reads MAPSSPRVLPALVLLAAAALPALELGAAA. Topologically, residues 30 to 2484 are extracellular; it reads WELRVPGGAR…REHGEVLPLK (2455 aa). Over residues 222–243 the composition is skewed to low complexity; the sequence is GTPSESPSVSPSLLNLSQPRAG. The interval 222–267 is disordered; sequence GTPSESPSVSPSLLNLSQPRAGVVRRSRRGTGSSTSPQFPLPSYQV. Asn236 carries N-linked (GlcNAc...) asparagine glycosylation. Cadherin domains are found at residues 261–368, 369–474, 475–580, 581–702, 703–804, 805–907, 908–1014, 1015–1116, and 1121–1239; these read PLPS…SPVF, EQSE…YPQF, SEKR…APIF, VSSP…DPMF, TQPV…RPVF, QSSH…APRF, LRDF…PPVF, EKDE…PPEL, and ILFN…SPLL. 3 N-linked (GlcNAc...) asparagine glycosylation sites follow: Asn561, Asn649, and Asn793. N-linked (GlcNAc...) asparagine glycans are attached at residues Asn1129, Asn1154, Asn1228, Asn1264, Asn1274, and Asn1302. The 59-residue stretch at 1318-1376 folds into the EGF-like 1; calcium-binding domain; that stretch reads DDNICLREPCENYMKCVSVLRFDSSAPFISSTTVLFRPIHPITGLRCRCPPGFTGDYCE. 9 disulfide bridges follow: Cys1322–Cys1333, Cys1327–Cys1364, Cys1366–Cys1375, Cys1382–Cys1393, Cys1387–Cys1402, Cys1404–Cys1413, Cys1422–Cys1433, Cys1427–Cys1443, and Cys1445–Cys1455. Positions 1378–1414 constitute an EGF-like 2; calcium-binding domain; sequence EIDLCYSNPCGANGRCRSREGGYTCECFEDFTGEHCQ. In terms of domain architecture, EGF-like 3; calcium-binding spans 1418 to 1456; it reads RSGRCASGVCKNGGTCVNLLIGGFHCVCPPGEYEHPYCE. Residues 1457–1661 form the Laminin G-like 1 domain; sequence VSTRSFPPQS…IANNGTRAGC (205 aa). Residues Asn1591, Asn1638, and Asn1655 are each glycosylated (N-linked (GlcNAc...) asparagine). 13 disulfide bridges follow: Cys1635/Cys1661, Cys1668/Cys1679, Cys1673/Cys1688, Cys1690/Cys1699, Cys1855/Cys1885, Cys1891/Cys1902, Cys1896/Cys1911, Cys1913/Cys1922, Cys1926/Cys1937, Cys1931/Cys1949, Cys1951/Cys1960, Cys1968/Cys1981, and Cys1983/Cys1993. The EGF-like 4; calcium-binding domain occupies 1664 to 1700; sequence QRNFCDGTSCQNGGTCVNRWNTYLCECPLRFGGKNCE. Asn1681 bears the (3R)-3-hydroxyasparagine mark. Positions 1704–1885 constitute a Laminin G-like 2 domain; that stretch reads PHPQRFTGES…ALKVRVKDGC (182 aa). In terms of domain architecture, EGF-like 5; calcium-binding spans 1887–1922; the sequence is VEDPCASSPCPPHSHCRDTWDSYSCICDRGYFGKKC. Position 1904 is a (3R)-3-hydroxyaspartate (Asp1904). An EGF-like 6; calcium-binding domain is found at 1923 to 1961; it reads VDACLLNPCKHVAACVRSPNTPRGYSCECGPGHYGQYCE. Residues 1962 to 1994 enclose the EGF-like 7; calcium-binding domain; that stretch reads NKVDLPCPKGWWGNPVCGPCHCAVSQGFDPDCN. Asn1994 carries N-linked (GlcNAc...) asparagine glycosylation. One can recognise an EGF-like 8; calcium-binding domain in the interval 1996–2031; the sequence is TNGQCQCKENYYKPPAQDACLPCDCFPHGSHSRACD. 5 cysteine pairs are disulfide-bonded: Cys2000–Cys2015, Cys2002–Cys2018, Cys2020–Cys2030, Cys2039–Cys2048, and Cys2051–Cys2063. The Laminin EGF-like domain maps to 2018–2065; the sequence is CDCFPHGSHSRACDMDTGQCACKPGVIGRQCNRCDNPFAEVTSLGCEV. N-linked (GlcNAc...) asparagine glycans are attached at residues Asn2118, Asn2137, Asn2144, Asn2155, Asn2160, and Asn2272. The segment at 2295–2346 is disordered; that stretch reads SVSFPADTFKPPEKKEGPVVRLTNRRTTPLTAQPEPRAERETSSSRRRRHPD. The GAIN-B domain maps to 2312 to 2476; sequence PVVRLTNRRT…AVLMDISRRE (165 aa). 2 disulfide bridges follow: Cys2426-Cys2458 and Cys2446-Cys2460. A GPS region spans residues 2426–2476; it reads CVFWNHSLDTGGTGGWSAKGCELLSRNRTHVTCQCSHSASCAVLMDISRRE. N-linked (GlcNAc...) asparagine glycans are attached at residues Asn2430 and Asn2452. The chain crosses the membrane as a helical span at residues 2485–2505; it reads IITYAALSLSLVALLVAFVLL. Over 2506 to 2516 the chain is Cytoplasmic; the sequence is SLVRTLRSNLH. The chain crosses the membrane as a helical span at residues 2517–2537; that stretch reads SIHKNLITALFFSQLIFMVGI. Residue Asn2538 is glycosylated (N-linked (GlcNAc...) asparagine). Residues 2538-2542 lie on the Extracellular side of the membrane; it reads NQTEN. The chain crosses the membrane as a helical span at residues 2543 to 2563; that stretch reads PFLCTVVAILLHYVSMGTFAW. Residues 2564–2587 lie on the Cytoplasmic side of the membrane; that stretch reads TLVENLHVYRMLTEVRNIDTGPMR. The chain crosses the membrane as a helical span at residues 2588–2608; sequence FYHVVGWGIPAIVTGLAVGLD. At 2609 to 2625 the chain is on the extracellular side; that stretch reads PQGYGNPDFCWLSLQDT. A helical transmembrane segment spans residues 2626–2646; the sequence is LIWSFAGPVGTVIIINTVIFV. At 2647–2670 the chain is on the cytoplasmic side; sequence LSAKVSCQRKHHYYERKGVVSMLR. The helical transmembrane segment at 2671–2691 threads the bilayer; it reads TAFLLLLLVTATWLLGLLAVN. At 2692–2694 the chain is on the extracellular side; the sequence is SDT. The helical transmembrane segment at 2695-2715 threads the bilayer; it reads LSFHYLFAAFSCLQGIFVLLF. The Cytoplasmic portion of the chain corresponds to 2716-3034; sequence HCVAHREVRK…QANGSDSEKP (319 aa). Residues 2774-3034 are disordered; sequence TASLDSTTRD…QANGSDSEKP (261 aa). Phosphoserine is present on residues Ser2776, Ser2779, Ser2886, and Ser2888. Over residues 2893-2909 the composition is skewed to basic and acidic residues; sequence TEPHLKVETKVSVELHR. The segment covering 2976–2986 has biased composition (low complexity); sequence SPTSSRTSSLG. Basic and acidic residues predominate over residues 3003–3012; the sequence is PRREPGREHL. The segment covering 3020 to 3034 has biased composition (polar residues); that stretch reads RTGSAQANGSDSEKP.

It belongs to the G-protein coupled receptor 2 family. LN-TM7 subfamily. In terms of processing, the iron and 2-oxoglutarate dependent 3-hydroxylation of aspartate and asparagine is (R) stereospecific within EGF domains. Expressed in the brain, where it is localized principally in the ependymal cell layer, choroid plexus and the area postrema. Also found in spinal cord and in the eye.

The protein resides in the cell membrane. Functionally, receptor that may have an important role in cell/cell signaling during nervous system formation. This is Cadherin EGF LAG seven-pass G-type receptor 1 (Celsr1) from Mus musculus (Mouse).